We begin with the raw amino-acid sequence, 465 residues long: Neuromedin-K receptor (465 aa).

At 1-84 (MATLPAAETW…TNQFVQPSWR (84 aa)) the chain is on the extracellular side. Residues Asn23, Asn50, and Asn73 are each glycosylated (N-linked (GlcNAc...) asparagine). A helical transmembrane segment spans residues 85–107 (IALWSLAYGVVVAVAVLGNLIVI). The Cytoplasmic segment spans residues 108–117 (WIILAHKRMR). A helical membrane pass occupies residues 118–139 (TVTNYFLVNLAFSDASMAAFNT). Residues 140 to 159 (LVNFIYALHSEWYFGANYCR) are Extracellular-facing. A disulfide bond links Cys158 and Cys233. The helical transmembrane segment at 160 to 181 (FQNFFPITAVFASIYSMTAIAV) threads the bilayer. The Cytoplasmic portion of the chain corresponds to 182-201 (DRYMAIIDPLKPRLSATATK). Residues 202–222 (IVIGSIWILAFLLAFPQCLYS) form a helical membrane-spanning segment. The Extracellular segment spans residues 223 to 245 (KTKVMPGRTLCFVQWPEGPKQHF). The helical transmembrane segment at 246–270 (TYHIIVIILVYCFPLLIMGITYTIV) threads the bilayer. Residues 271–299 (GITLWGGEIPGDTCDKYHEQLKAKRKVVK) lie on the Cytoplasmic side of the membrane. Residues 300 to 321 (MMIIVVMTFAICWLPYHIYFIL) form a helical membrane-spanning segment. Residues 322–334 (TAIYQQLNRWKYI) lie on the Extracellular side of the membrane. The chain crosses the membrane as a helical span at residues 335–359 (QQVYLASFWLAMSSTMYNPIIYCCL). The Cytoplasmic portion of the chain corresponds to 360–465 (NKRFRAGFKR…SPYTSVDEYS (106 aa)). Cys374 carries the S-palmitoyl cysteine lipid modification. The interval 415 to 465 (PNDADTTRSSRKKRATPRDPSFNGCSRRNSKSASATSSFISSPYTSVDEYS) is disordered. The span at 445–465 (KSASATSSFISSPYTSVDEYS) shows a compositional bias: low complexity.

Belongs to the G-protein coupled receptor 1 family. In terms of processing, the anchoring of this receptor to the plasma membrane is probably mediated by the palmitoylation of a cysteine residue.

It localises to the cell membrane. This is a receptor for the tachykinin neuropeptide neuromedin-K (neurokinin B). It is associated with G proteins that activate a phosphatidylinositol-calcium second messenger system. The rank order of affinity of this receptor to tachykinins is: neuromedin-K &gt; substance K &gt; substance P. The chain is Neuromedin-K receptor (TACR3) from Homo sapiens (Human).